Consider the following 281-residue polypeptide: DegV domain-containing protein (281 aa).

Residues 3–280 enclose the DegV domain; that stretch reads WKIVSDSGCD…EGGLLMGYEI (278 aa). Hexadecanoate contacts are provided by Ser-63 and Ser-91.

Functionally, may bind long-chain fatty acids, such as palmitate, and may play a role in lipid transport or fatty acid metabolism. In Streptococcus gordonii, this protein is DegV domain-containing protein.